Reading from the N-terminus, the 469-residue chain is UDP-N-acetylmuramate--L-alanine ligase (469 aa).

Glycine 123–threonine 129 contacts ATP.

This sequence belongs to the MurCDEF family.

It is found in the cytoplasm. The enzyme catalyses UDP-N-acetyl-alpha-D-muramate + L-alanine + ATP = UDP-N-acetyl-alpha-D-muramoyl-L-alanine + ADP + phosphate + H(+). The protein operates within cell wall biogenesis; peptidoglycan biosynthesis. Its function is as follows. Cell wall formation. This chain is UDP-N-acetylmuramate--L-alanine ligase, found in Synechococcus sp. (strain CC9605).